We begin with the raw amino-acid sequence, 121 residues long: MAKKITATNPRLVKLIEILKQESYKNQAKIWKDIARRLAKPRRRRAEVNLSKINRYTKEGDVVLVPGKVLGAGKLEHKVVVAAFAFSETAKKLIKEAGGEAITIEELIKRNPKGSNVKIMA.

It belongs to the eukaryotic ribosomal protein eL18 family.

The sequence is that of Large ribosomal subunit protein eL18 from Methanocaldococcus jannaschii (strain ATCC 43067 / DSM 2661 / JAL-1 / JCM 10045 / NBRC 100440) (Methanococcus jannaschii).